Consider the following 279-residue polypeptide: Shikimate dehydrogenase (NADP(+)) (279 aa).

Residues S19–S21 and T66 each bind shikimate. K70 acts as the Proton acceptor in catalysis. Residue E82 coordinates NADP(+). Shikimate contacts are provided by N91 and D106. Residues G130–A134 and L222 each bind NADP(+). Y224 is a binding site for shikimate. Position 245 (G245) interacts with NADP(+).

This sequence belongs to the shikimate dehydrogenase family. Homodimer.

The catalysed reaction is shikimate + NADP(+) = 3-dehydroshikimate + NADPH + H(+). The protein operates within metabolic intermediate biosynthesis; chorismate biosynthesis; chorismate from D-erythrose 4-phosphate and phosphoenolpyruvate: step 4/7. In terms of biological role, involved in the biosynthesis of the chorismate, which leads to the biosynthesis of aromatic amino acids. Catalyzes the reversible NADPH linked reduction of 3-dehydroshikimate (DHSA) to yield shikimate (SA). This Methanococcus maripaludis (strain C6 / ATCC BAA-1332) protein is Shikimate dehydrogenase (NADP(+)).